The following is a 334-amino-acid chain: MIRLSILDQSLIGEGETAADTLQHTVKLAQMAEECGYHRFWVAEHHNNDEIAGSAPEVLLGYLAASTRKIRLASGGVMLQHYSSYKVAEQFHLLSALAPGRIDLGVGKAPGGFQLSTDALQAEYKKPVRQFDEKLEELTHFVRDDFPDTHRYAALRPRPQVDRKPGIFLLGGSTESAISAAKLGISFVFAYFINGEEEVLKEARRAFDAHLPPGSEAEFHLAPAVFAAHTKEEAEKHIVSRESIKVVLKDGRKVNVGSREQAEAYLENVTEPYDIIVQKTGIIAGTKEEVAEELTRLSGTYKINDFVIFTPIKNAVEKQLSYQLLSDAVLAAKR.

It to bacterial alkanal monooxygenase alpha and beta chains.

The catalysed reaction is N-acetyl-S-benzyl-L-cysteine + FMNH2 + O2 = (R)-N-acetyl-S-benzyl-L-cysteine sulfoxide + FMN + H2O + H(+). It carries out the reaction N-acetyl-S-methyl-L-cysteine + FMNH2 + O2 = (R)-N-acetyl-S-methyl-L-cysteine sulfoxide + FMN + H2O + H(+). Its pathway is amino-acid metabolism. Functionally, involved in a cysteine salvage pathway from S-alkylcysteine. Catalyzes the oxidation of N-acetyl-S-benzyl-L-cysteine and N-acetyl-S-methyl-L-cysteine to (R)-N-acetyl-S-benzyl-L-cysteine sulfoxide and (R)-N-acetyl-S-methyl-L-cysteine sulfoxide, respectively. This pathway is likely important in the catabolism of alkylated cysteine generated by proteolysis of alkylated glutathione formed in the detoxification of a wide range of electrophiles. This Bacillus subtilis (strain 168) protein is N-acetyl-S-alkylcysteine monooxygenase.